The following is a 368-amino-acid chain: Mitochondrial intermembrane space import and assembly protein 40 (368 aa).

The N-terminal 29 residues, 1 to 29, are a transit peptide targeting the mitochondrion; the sequence is MYRNTMRSASRPVIASLRSSTIRAAPRRF. Topologically, residues 30–47 are mitochondrial matrix; sequence ASTAPADKPRSFKGSLVR. A helical; Signal-anchor for type II membrane protein membrane pass occupies residues 48-65; the sequence is LGLAFGAVYYYNTSPIFA. Topologically, residues 66 to 368 are mitochondrial intermembrane; the sequence is DEAISKTVPA…AAKKNAEKKQ (303 aa). Over residues 95–104 the composition is skewed to basic and acidic residues; sequence RKQIKAKSEE. The segment at 95 to 144 is disordered; the sequence is RKQIKAKSEETAASSKTPESQQSNPQTAAADGSPAALEEEAGQQGAFNPE. Residues 105–121 are compositionally biased toward polar residues; it reads TAASSKTPESQQSNPQT. Cystine bridges form between Cys-152–Cys-154, Cys-163–Cys-196, and Cys-173–Cys-186. A CHCH domain is found at 160-204; sequence DGPCGEEFKTAFSCFVFSQEEPKGMDCIDKFQGMQECFKKYPDIY. Short sequence motifs (cx9C motif) lie at residues 163 to 173 and 186 to 196; these read CGEEFKTAFSC and CIDKFQGMQEC. The segment at 208-310 is disordered; the sequence is LADDEDGAPT…GSRMVQDVAI (103 aa). The segment covering 240 to 263 has biased composition (basic and acidic residues); sequence LARETKDKTAADATKFDDSQKPAE. A compositionally biased stretch (low complexity) spans 264–280; the sequence is SKTPAKTTSTSTDSAQK. Positions 283–295 are enriched in basic and acidic residues; the sequence is VDAHRDAEPKSDA.

As to quaternary structure, monomer. Cu(2+) serves as cofactor. Requires Zn(2+) as cofactor.

It localises to the mitochondrion inner membrane. Functionally, required for the import and folding of small cysteine-containing proteins (small Tim) in the mitochondrial intermembrane space (IMS). Forms a redox cycle with ERV1 that involves a disulfide relay system. Precursor proteins to be imported into the IMS are translocated in their reduced form into the mitochondria. The oxidized form of MIA40 forms a transient intermolecular disulfide bridge with the reduced precursor protein, resulting in oxidation of the precursor protein that now contains an intramolecular disulfide bond and is able to undergo folding in the IMS. This chain is Mitochondrial intermembrane space import and assembly protein 40 (MIA40), found in Gibberella zeae (strain ATCC MYA-4620 / CBS 123657 / FGSC 9075 / NRRL 31084 / PH-1) (Wheat head blight fungus).